The primary structure comprises 94 residues: Small ubiquitin-related modifier 3 (94 aa).

Lys-11 participates in a covalent cross-link: Glycyl lysine isopeptide (Lys-Gly) (interchain with G-Cter in SUMO). The Ubiquitin-like domain occupies 15–92 (DHINLKVAGQ…IDVFQQQTGG (78 aa)). Residue Gly-92 forms a Glycyl lysine isopeptide (Gly-Lys) (interchain with K-? in acceptor proteins) linkage. A propeptide spanning residues 93–94 (SC) is cleaved from the precursor.

The protein belongs to the ubiquitin family. SUMO subfamily. As to quaternary structure, interacts with sae2 and ube2i. Covalently attached to a number of proteins. In terms of processing, polymeric chains can be formed through Lys-11 cross-linking. Cleavage of precursor form by a sentrin-specific protease is necessary for function.

The protein localises to the cytoplasm. Its subcellular location is the nucleus. It localises to the PML body. Functionally, ubiquitin-like protein which can be covalently attached to target lysines either as a monomer or as a lysine-linked polymer. Does not seem to be involved in protein degradation and may function as an antagonist of ubiquitin in the degradation process. Plays a role in a number of cellular processes such as nuclear transport, DNA replication and repair, mitosis and signal transduction. Covalent attachment to its substrates requires prior activation by the E1 complex sae1-sae2 and linkage to the E2 enzyme ube2i. The polypeptide is Small ubiquitin-related modifier 3 (sumo3) (Danio rerio (Zebrafish)).